The sequence spans 351 residues: MTIAVGRAPQRGWFDVLDDWLKRDRFVFVGWSGLLLFPTAYLALGGWFTGTTFVTSWYTHGIASSYLEGCNFLSAAVSTPADAMGHSLLLLWGPEAQGDFVRWCQLGGLWTFVALHGSFSLIGFMLRQFEIARLVGIRPYNALAFSGPVVVFLACFLIYPLGQHSWFFAPSFGVAAIFRFILFLQGFHNWTLNPFHMMGVAGILGGALLCGIHGATVQNTLFEDGAMSNTFKGFDPTQEEETYSMVTANRFWSQIFGIAFSNKRWLHFFMLFVPVMGMWTPSVGIVGLAVNLRAYDFVSQEVRAAEDPEFETFYTKNVLLNEGIRAWMSVADQPHENFVFPEEVMPRGNAL.

A helical transmembrane segment spans residues Thr39–Thr59. His116 provides a ligand contact to chlorophyll a. The helical transmembrane segment at Gly123–Pro139 threads the bilayer. Residues Gln128 and Asn141 each coordinate pheophytin a. The helical transmembrane segment at Val151–His164 threads the bilayer. His196 lines the chlorophyll a pocket. A helical transmembrane segment spans residues Gly206 to Ala226. 2 residues coordinate a plastoquinone: His213 and Phe260. A Fe cation-binding site is contributed by His213. His267 contributes to the Fe cation binding site. A helical membrane pass occupies residues Gly277 to Arg293.

This sequence belongs to the reaction center PufL/M/PsbA/D family. As to quaternary structure, PSII is composed of 1 copy each of membrane proteins PsbA, PsbB, PsbC, PsbD, PsbE, PsbF, PsbH, PsbI, PsbJ, PsbK, PsbL, PsbM, PsbT, PsbX, PsbY, Psb30/Ycf12, peripheral proteins PsbO, CyanoQ (PsbQ), PsbU, PsbV and a large number of cofactors. It forms dimeric complexes. Requires The D1/D2 heterodimer binds P680, chlorophylls that are the primary electron donor of PSII, and subsequent electron acceptors. It shares a non-heme iron and each subunit binds pheophytin, quinone, additional chlorophylls, carotenoids and lipids. There is also a Cl(-1) ion associated with D1 and D2, which is required for oxygen evolution. The PSII complex binds additional chlorophylls, carotenoids and specific lipids. as cofactor.

Its subcellular location is the cellular thylakoid membrane. It catalyses the reaction 2 a plastoquinone + 4 hnu + 2 H2O = 2 a plastoquinol + O2. Functionally, photosystem II (PSII) is a light-driven water:plastoquinone oxidoreductase that uses light energy to abstract electrons from H(2)O, generating O(2) and a proton gradient subsequently used for ATP formation. It consists of a core antenna complex that captures photons, and an electron transfer chain that converts photonic excitation into a charge separation. The D1/D2 (PsbA/PsbD) reaction center heterodimer binds P680, the primary electron donor of PSII as well as several subsequent electron acceptors. D2 is needed for assembly of a stable PSII complex. The sequence is that of Photosystem II D2 protein from Prochlorococcus marinus (strain MIT 9313).